The sequence spans 554 residues: 3-(3-hydroxy-phenyl)propionate/3-hydroxycinnamic acid hydroxylase (554 aa).

FAD contacts are provided by residues 17–46 and 285–295; these read QVAIAGAGPVGLMMANYLGQMGIDVLVVEK and FRIDRVLLAGD.

Belongs to the PheA/TfdB FAD monooxygenase family. It depends on FAD as a cofactor.

The catalysed reaction is 3-(3-hydroxyphenyl)propanoate + NADH + O2 + H(+) = 3-(2,3-dihydroxyphenyl)propanoate + NAD(+) + H2O. It carries out the reaction (2E)-3-(3-hydroxyphenyl)prop-2-enoate + NADH + O2 + H(+) = (2E)-3-(2,3-dihydroxyphenyl)prop-2-enoate + NAD(+) + H2O. It functions in the pathway aromatic compound metabolism; 3-phenylpropanoate degradation. Catalyzes the insertion of one atom of molecular oxygen into position 2 of the phenyl ring of 3-(3-hydroxyphenyl)propionate (3-HPP) and hydroxycinnamic acid (3HCI). The sequence is that of 3-(3-hydroxy-phenyl)propionate/3-hydroxycinnamic acid hydroxylase from Escherichia coli (strain 55989 / EAEC).